We begin with the raw amino-acid sequence, 67 residues long: Large ribosomal subunit protein eL24 (67 aa).

Positions 7, 10, 33, and 37 each coordinate Zn(2+). The segment at 7 to 37 adopts a C4-type zinc-finger fold; sequence CDYCGTDIEPGTGTMFVHKDGATTHFCSSKC. Over residues 48 to 60 the composition is skewed to basic and acidic residues; the sequence is RNLEWTDTARGEA. Residues 48-67 form a disordered region; sequence RNLEWTDTARGEAGEAEDEA.

The protein belongs to the eukaryotic ribosomal protein eL24 family. Part of the 50S ribosomal subunit. Forms a cluster with proteins L3 and L14. Zn(2+) is required as a cofactor.

Its function is as follows. Binds to the 23S rRNA. This chain is Large ribosomal subunit protein eL24 (rpl24e), found in Haloarcula marismortui (strain ATCC 43049 / DSM 3752 / JCM 8966 / VKM B-1809) (Halobacterium marismortui).